Consider the following 49-residue polypeptide: uncharacterized protein (49 aa).

An N-terminal signal peptide occupies residues 1–22 (MVFLLFLSFVLSSIFLVPLVYM).

The protein resides in the secreted. This is an uncharacterized protein from Dictyostelium discoideum (Social amoeba).